A 352-amino-acid polypeptide reads, in one-letter code: WAT1-related protein At1g11450 (352 aa).

The next 10 membrane-spanning stretches (helical) occupy residues 14–34, 46–66, 83–103, 107–127, 139–159, 187–207, 219–239, 253–273, 283–303, and 308–328; these read WPPM…NALV, IIGA…AYFL, FISG…GLSY, TVAC…ALIL, AGMI…FLTF, WLLG…WILF, FSST…LSLY, FVIG…TVAA, VFAS…DFLI, and LYLG…VFLW. EamA domains follow at residues 27–157 and 192–335; these read MGSV…ALFL and LYLV…KETE.

Belongs to the drug/metabolite transporter (DMT) superfamily. Plant drug/metabolite exporter (P-DME) (TC 2.A.7.4) family.

Its subcellular location is the membrane. The chain is WAT1-related protein At1g11450 from Arabidopsis thaliana (Mouse-ear cress).